Here is a 306-residue protein sequence, read N- to C-terminus: Ethylmalonyl-CoA decarboxylase (306 aa).

Position 216 is an N6-acetyllysine; alternate (K216). N6-succinyllysine; alternate is present on K216.

It belongs to the enoyl-CoA hydratase/isomerase family.

Its subcellular location is the cytoplasm. It localises to the cytosol. It carries out the reaction (2S)-ethylmalonyl-CoA + H(+) = butanoyl-CoA + CO2. The enzyme catalyses (S)-methylmalonyl-CoA + H(+) = propanoyl-CoA + CO2. The catalysed reaction is (2R)-ethylmalonyl-CoA + H(+) = butanoyl-CoA + CO2. Functionally, decarboxylates ethylmalonyl-CoA, a potentially toxic metabolite, to form butyryl-CoA, suggesting it might be involved in metabolite proofreading. Acts preferentially on (S)-ethylmalonyl-CoA but also has some activity on the (R)-isomer. Also has methylmalonyl-CoA decarboxylase activity at lower level. The polypeptide is Ethylmalonyl-CoA decarboxylase (ECHDC1) (Bos taurus (Bovine)).